Here is a 420-residue protein sequence, read N- to C-terminus: Trophoblast glycoprotein (420 aa).

The signal sequence occupies residues 1–31; it reads MPGGCSRGPAAGDGRLRLARLALVLLGWVSS. Topologically, residues 32 to 355 are extracellular; it reads SSPTSSASSF…PILPPSLQTS (324 aa). An LRRNT domain is found at 53-91; that stretch reads SAQPPLPDQCPALCECSEAARTVKCVNRNLTEVPTDLPA. Disulfide bonds link Cys-62-Cys-68 and Cys-66-Cys-77. The N-linked (GlcNAc...) asparagine glycan is linked to Asn-81. LRR repeat units follow at residues 92 to 113, 116 to 139, 141 to 163, 172 to 204, 209 to 232, 233 to 255, and 256 to 275; these read YVRN…AFAR, PLAE…GAFE, LPSL…FAFS, PSPL…AALL, LQGL…VLAQ, LPSL…VSFR, and NLTH…VLHN. Asn-124 carries N-linked (GlcNAc...) asparagine glycosylation. Residue Asn-275 is glycosylated (N-linked (GlcNAc...) asparagine). Residues 283 to 346 enclose the LRRCT domain; the sequence is GLPHIRVFLD…LNSADLDCDP (64 aa). 2 cysteine pairs are disulfide-bonded: Cys-298-Cys-323 and Cys-300-Cys-344. Residues 356-376 form a helical membrane-spanning segment; sequence YVFLGIVLALIGAIFLLVLYL. The Cytoplasmic segment spans residues 377-420; it reads NRKGIKKWMHNIRDACRDHMEGYHYRYEINADPRLTNLSSNSDV. Phosphoserine is present on Ser-418.

In terms of processing, highly glycosylated. As to expression, expressed by all types of trophoblasts as early as 9 weeks of development. Specific for trophoblastic cells except for amniotic epithelium. In adult tissues, the expression is limited to a few epithelial cell types but is found on a variety of carcinoma.

The protein resides in the cell membrane. Its function is as follows. May function as an inhibitor of Wnt/beta-catenin signaling by indirectly interacting with LRP6 and blocking Wnt3a-dependent LRP6 internalization. In Homo sapiens (Human), this protein is Trophoblast glycoprotein (TPBG).